Reading from the N-terminus, the 95-residue chain is Integration host factor subunit beta (95 aa).

The disordered stretch occupies residues 57 to 76 (APRTGRNPKTGDKVDLEGKY). The span at 65–76 (KTGDKVDLEGKY) shows a compositional bias: basic and acidic residues.

This sequence belongs to the bacterial histone-like protein family. As to quaternary structure, heterodimer of an alpha and a beta chain.

This protein is one of the two subunits of integration host factor, a specific DNA-binding protein that functions in genetic recombination as well as in transcriptional and translational control. The sequence is that of Integration host factor subunit beta from Enterobacter sp. (strain 638).